Here is a 367-residue protein sequence, read N- to C-terminus: Glycolate oxidase 1 (367 aa).

An N-acetylmethionine modification is found at methionine 1. Position 24 (tyrosine 24) interacts with glyoxylate. Residues 77-79, serine 106, 127-129, and threonine 155 each bind FMN; these read PTA and QLY. Tyrosine 129 lines the glyoxylate pocket. Position 164 (arginine 164) interacts with glyoxylate. 2 residues coordinate FMN: lysine 230 and serine 252. Glyoxylate is bound by residues histidine 254 and arginine 257. Histidine 254 acts as the Proton acceptor in catalysis. Residues 285-289 and 308-309 each bind FMN; these read DGGVR and GR.

Belongs to the FMN-dependent alpha-hydroxy acid dehydrogenase family. As to quaternary structure, homotetramer. FMN serves as cofactor.

The protein localises to the peroxisome. The enzyme catalyses glycolate + O2 = glyoxylate + H2O2. It participates in photosynthesis; photorespiration; glycine from 2-phosphoglycolate: step 2/3. Catalyzes the oxidation of glycolate to glyoxylate, with a reduction of O2 to H2O2. Is a key enzyme in photorespiration in green plants. This Arabidopsis thaliana (Mouse-ear cress) protein is Glycolate oxidase 1 (GLO1).